The primary structure comprises 597 residues: Probable serine/threonine-protein kinase DDB_G0281745 (597 aa).

Over residues threonine 49–proline 61 the composition is skewed to polar residues. The disordered stretch occupies residues threonine 49 to alanine 320. Pro residues predominate over residues glutamine 72–threonine 97. Polar residues predominate over residues threonine 114 to glycine 140. Residues serine 157 to asparagine 168 show a composition bias toward low complexity. Residues proline 208 to glutamine 234 show a composition bias toward pro residues. Positions proline 235 to glutamine 264 are enriched in low complexity. A compositionally biased stretch (pro residues) spans glutamine 265 to glutamine 274. A compositionally biased stretch (low complexity) spans proline 275 to glycine 301. Residues lysine 334–tyrosine 585 form the Protein kinase domain. ATP-binding positions include isoleucine 340–valine 348 and lysine 361. Catalysis depends on aspartate 454, which acts as the Proton acceptor.

It belongs to the protein kinase superfamily. TKL Ser/Thr protein kinase family.

It carries out the reaction L-seryl-[protein] + ATP = O-phospho-L-seryl-[protein] + ADP + H(+). The enzyme catalyses L-threonyl-[protein] + ATP = O-phospho-L-threonyl-[protein] + ADP + H(+). The polypeptide is Probable serine/threonine-protein kinase DDB_G0281745 (Dictyostelium discoideum (Social amoeba)).